The following is a 158-amino-acid chain: Fluoride-specific ion channel FluC 2 (158 aa).

4 helical membrane passes run 25–45, 63–83, 95–115, and 126–146; these read AWHG…IGGT, WTTF…MVVI, PFFG…AVDI, and TALA…RLAA. 2 residues coordinate Na(+): Gly-103 and Thr-106.

It belongs to the fluoride channel Fluc/FEX (TC 1.A.43) family.

It localises to the cell membrane. The catalysed reaction is fluoride(in) = fluoride(out). With respect to regulation, na(+) is not transported, but it plays an essential structural role and its presence is essential for fluoride channel function. Its function is as follows. Fluoride-specific ion channel. Important for reducing fluoride concentration in the cell, thus reducing its toxicity. This Streptomyces avermitilis (strain ATCC 31267 / DSM 46492 / JCM 5070 / NBRC 14893 / NCIMB 12804 / NRRL 8165 / MA-4680) protein is Fluoride-specific ion channel FluC 2.